Consider the following 800-residue polypeptide: Elongation factor G, mitochondrial (800 aa).

The N-terminal 59 residues, 1–59 (MRVIRAVATLHAGRAAAVRQGVRSVSLGACRAAVETPSLRSAGSQFESRRLFSRSSYLR), are a transit peptide targeting the mitochondrion. The tr-type G domain maps to 99–385 (ARVRNIGIAA…AVCDYLPNPN (287 aa)). GTP is bound by residues 108–115 (AHIDSGKT), 183–187 (DTPGH), and 237–240 (NKMD).

This sequence belongs to the TRAFAC class translation factor GTPase superfamily. Classic translation factor GTPase family. EF-G/EF-2 subfamily.

The protein resides in the mitochondrion. It functions in the pathway protein biosynthesis; polypeptide chain elongation. Mitochondrial GTPase that catalyzes the GTP-dependent ribosomal translocation step during translation elongation. During this step, the ribosome changes from the pre-translocational (PRE) to the post-translocational (POST) state as the newly formed A-site-bound peptidyl-tRNA and P-site-bound deacylated tRNA move to the P and E sites, respectively. Catalyzes the coordinated movement of the two tRNA molecules, the mRNA and conformational changes in the ribosome. In Neurospora crassa (strain ATCC 24698 / 74-OR23-1A / CBS 708.71 / DSM 1257 / FGSC 987), this protein is Elongation factor G, mitochondrial (mef1).